The chain runs to 530 residues: Glutamate--cysteine ligase (530 aa).

Belongs to the glutamate--cysteine ligase type 1 family. Type 1 subfamily.

It carries out the reaction L-cysteine + L-glutamate + ATP = gamma-L-glutamyl-L-cysteine + ADP + phosphate + H(+). It functions in the pathway sulfur metabolism; glutathione biosynthesis; glutathione from L-cysteine and L-glutamate: step 1/2. This Pseudomonas entomophila (strain L48) protein is Glutamate--cysteine ligase.